The primary structure comprises 122 residues: Holo-[acyl-carrier-protein] synthase (122 aa).

Mg(2+) contacts are provided by D8 and E58.

Belongs to the P-Pant transferase superfamily. AcpS family. Mg(2+) is required as a cofactor.

It localises to the cytoplasm. The enzyme catalyses apo-[ACP] + CoA = holo-[ACP] + adenosine 3',5'-bisphosphate + H(+). Functionally, transfers the 4'-phosphopantetheine moiety from coenzyme A to a Ser of acyl-carrier-protein. The sequence is that of Holo-[acyl-carrier-protein] synthase from Levilactobacillus brevis (strain ATCC 367 / BCRC 12310 / CIP 105137 / JCM 1170 / LMG 11437 / NCIMB 947 / NCTC 947) (Lactobacillus brevis).